A 413-amino-acid polypeptide reads, in one-letter code: MVEAERAENSWIASETSPSSSPVVIESSDFSITDGMRDVSGFGIASRPQLDKGLSENNIGFTERVFSAAGAAVLSAVTLNPLDVVKTRLQAQAAGMSYSHPLSNSIGRMAFFGPNMMFADLRCSPSCARAGVEGTVSICPPDCFQYKGTFDVFTKIIRQEGLGRLWRGTNAGLALAVPMVGIYLPFYDMFRNRLEELSREKAPAMTFCVPTVAGSLARSLACTVCYPIDLARTRMQAFKEAKAGVKPPGVFKTLVGVFSEVRTANNLESSLHNYRGLWRGLGAQLARDVPFSAICWSTLEPIKKRLLGVAGNDTNLVGVFGATFSAGFIAGSIAAAATCPLDVARTRRQIEKDPGRALMMTTRQTLIEVWRDGGMRGLFMGMGPRVARAGPSVGIVVSFYEVVKYVLHRHASS.

Solcar repeat units follow at residues 59–193 (IGFT…FRNR), 205–305 (MTFC…IKKR), and 318–406 (GVFG…VKYV). Helical transmembrane passes span 65-85 (VFSAAGAAVLSAVTLNPLDVV), 170-190 (NAGLALAVPMVGIYLPFYDMF), 204-226 (AMTFCVPTVAGSLARSLACTVCY), 284-304 (QLARDVPFSAICWSTLEPIKK), 316-336 (LVGVFGATFSAGFIAGSIAAA), and 378-399 (LFMGMGPRVARAGPSVGIVVSF).

The protein belongs to the mitochondrial carrier (TC 2.A.29) family. In terms of tissue distribution, ubiquitous.

It is found in the mitochondrion inner membrane. In terms of biological role, involved in the mitochondrial activation of MSD1 by specifically facilitating insertion of the essential manganese cofactor. Has the ability to activate iron regulon in an iron-dependent manner. In Arabidopsis thaliana (Mouse-ear cress), this protein is Mitochondrial carrier protein MTM1 (MTM1).